Reading from the N-terminus, the 659-residue chain is Homeobox protein slou (659 aa).

Positions 1 to 21 (MVMLQSPAQKASDSASAQNTA) are enriched in polar residues. Disordered regions lie at residues 1 to 63 (MVML…PAAK), 94 to 152 (MSSE…SFSS), 198 to 298 (AQQH…AAPS), 316 to 349 (TQAS…PSGR), 376 to 440 (QIAA…DRDA), and 455 to 548 (PNKF…PRRA). Low complexity-rich tracts occupy residues 27–51 (SPNS…SVVS), 95–108 (SSES…LSPL), and 120–135 (HNNN…NSNT). The span at 136–152 (RRSQSPPASVGSVSFSS) shows a compositional bias: polar residues. Residues 201 to 232 (HMHHHQHQHHQHPAHPHSHQHPHPHPHPHPHP) show a composition bias toward basic residues. 7 repeat units span residues 221–222 (HP), 223–224 (HP), 225–226 (HP), 227–228 (HP), 229–230 (HP), 231–232 (HP), and 233–234 (HP). A 7 X 2 AA tandem repeats of H-P region spans residues 221–234 (HPHPHPHPHPHPHP). Composition is skewed to pro residues over residues 250 to 263 (PPSP…PPTS) and 275 to 286 (PIAPPQNPPHSS). 2 stretches are compositionally biased toward low complexity: residues 287–298 (QPPQQQQVAAPS) and 316–347 (TQAS…GSPS). A compositionally biased stretch (acidic residues) spans 388–401 (SEELNVDGNDEDSN). A compositionally biased stretch (low complexity) spans 417-435 (RSVNSSAAANPSSASTSAS). Acidic residues-rich tracts occupy residues 478-492 (RDEE…DQSE) and 500-519 (NDMD…DPSS). Residues 528-543 (SRNGDGKSGGGGGGGS) show a composition bias toward gly residues. A DNA-binding region (homeobox) is located at residues 545–604 (PRRARTAFTYEQLVSLENKFKTTRYLSVCERLNLALSLSLTETQVKIWFQNRRTKWKKQN).

The protein belongs to the NK-1 homeobox family. In terms of tissue distribution, mesodermal precursor cells of distinct muscles during embryogenesis, a subset of neuronal cells of the CNS and their precursors and also in cells of a small region of the midgut.

The protein localises to the nucleus. In terms of biological role, may play a role in specifying the identity of particular somatic muscles and neurons of the CNS. This Drosophila melanogaster (Fruit fly) protein is Homeobox protein slou (slou).